We begin with the raw amino-acid sequence, 633 residues long: Membrane protein insertase YidC (633 aa).

6 helical membrane-spanning segments follow: residues 3–23 (KNTL…SWFN), 377–397 (FIHN…IILF), 453–473 (LPML…PSAI), 499–519 (IPII…LMTI), 541–561 (GMKA…NQYA), and 562–582 (SGLT…TLIF). The tract at residues 612-633 (LEEAQRAQQETLRKQQEAKKKR) is disordered.

It belongs to the OXA1/ALB3/YidC family. Type 1 subfamily. Interacts with the Sec translocase complex via SecD. Specifically interacts with transmembrane segments of nascent integral membrane proteins during membrane integration.

The protein localises to the cell inner membrane. In terms of biological role, required for the insertion and/or proper folding and/or complex formation of integral membrane proteins into the membrane. Involved in integration of membrane proteins that insert both dependently and independently of the Sec translocase complex, as well as at least some lipoproteins. Aids folding of multispanning membrane proteins. This chain is Membrane protein insertase YidC, found in Parabacteroides distasonis (strain ATCC 8503 / DSM 20701 / CIP 104284 / JCM 5825 / NCTC 11152).